We begin with the raw amino-acid sequence, 211 residues long: Mitotic spindle assembly checkpoint protein MAD2B (211 aa).

The 191-residue stretch at 13-203 (QVVADVLSEF…SDILKMQLYV (191 aa)) folds into the HORMA domain.

As to quaternary structure, homooligomer. Interacts with REV1. Interacts with FZR1 (in complex with the anaphase promoting complex APC). May interact with CDC20. Heterodimer with REV3L. This dimer forms the minimal DNA polymerase zeta complex (Pol-zeta2), with REV3L bearing DNA polymerase catalytic activity, although its activity is very low in this context. Component of the tetrameric Pol-zeta complex (Pol-zeta4), which consists of REV3L, MAD2L2, POLD2 and POLD3; Pol-zeta4 is the fully active form of DNA polymerase zeta. Component of the shieldin complex, consisting of SHLD1, SHLD2, SHLD3 and MAD2L2/REV7. Within the complex, SHLD2 forms a scaffold which interacts with a SHLD3-MAD2L2 subcomplex via its N-terminus, and with SHLD1 via its C-terminus.

Its subcellular location is the nucleus. The protein localises to the cytoplasm. It localises to the cytoskeleton. The protein resides in the spindle. It is found in the chromosome. In terms of biological role, adapter protein able to interact with different proteins and involved in different biological processes. Mediates the interaction between the error-prone DNA polymerase zeta catalytic subunit REV3L and the inserter polymerase REV1, thereby mediating the second polymerase switching in translesion DNA synthesis. Translesion DNA synthesis releases the replication blockade of replicative polymerases, stalled in presence of DNA lesions. May also play a role in signal transduction in response to DNA damage. May regulate the activation of the anaphase promoting complex APC thereby regulating progression through the cell cycle. Component of the shieldin complex, which plays an important role in repair of DNA double-stranded breaks (DSBs). During G1 and S phase of the cell cycle, the complex functions downstream of TP53BP1 to promote non-homologous end joining (NHEJ) and suppress DNA end resection. Through transcriptional regulation may play a role in epithelial-mesenchymal transdifferentiation. The chain is Mitotic spindle assembly checkpoint protein MAD2B (MAD2L2) from Gallus gallus (Chicken).